The sequence spans 185 residues: MGDPLQDRTRRLLTDYILFCARAPNTPEPLPTSVEAALLRSVTSQIQQEHQDLFNSFRDYQGNRLELVTQMADELLSNDQEFNWGRLVMLLAFVGTLMNQDRTVKRRRDQRNRLLLERDCYLIVSLLYNRLTGRHRSWLEAHGGWDGFCQFFKNPLPPGFWRRLLIRAILSCFFATAIFYIWKCL.

A BH1 motif is present at residues 76 to 95 (LSNDQEFNWGRLVMLLAFVG). The BH2 motif lies at 138–149 (WLEAHGGWDGFC). Residues 160–182 (FWRRLLIRAILSCFFATAIFYIW) traverse the membrane as a helical segment.

The protein belongs to the Bcl-2 family. In terms of assembly, interacts with BAX. Interacts with BCL2, BCL2L1/BCLX. Interacts with APAF1. Interacts with ITPR1, ITPR2 and ITPR3; the interaction with ITPR1 is increased in the presence of AHCLY1. Interacts with AHCYL1. Interacts with HIP1R (via ENTH and I/LWEQ domains). Interacts with CASP9. Interacts with BCL2L11/BIM. Interacts with BIK. Interacts with UBQLN4. Interacts with NME2/NM23-H2. Interacts with and PMAIP1/NOXA. Interacts with TPX2. Interacts with UBQLN1; in the cytoplasm. Interacts (via BH1 domain) with BECN1. Ca(2+) is required as a cofactor. In terms of processing, monoubiquitinated by UBQLN1; results in stabilization of BCL2L10 protein abundance and in relocalization from mitochondria to cytoplasm. As to expression, expressed in oligodendroglial lineage cells.

It localises to the mitochondrion. The protein localises to the nucleus membrane. The protein resides in the endoplasmic reticulum. It is found in the cytoplasm. Its subcellular location is the cytoskeleton. It localises to the spindle. Promotes cell survival by suppressing apoptosis induced by BAX but not BAK. Increases binding of AHCYL1/IRBIT to ITPR1. Reduces ITPR1-mediated calcium release from the endoplasmic reticulum cooperatively with AHCYL1/IRBIT under normal cellular conditions. Under apoptotic stress conditions, dissociates from ITPR1 and is displaced from mitochondria-associated endoplasmic reticulum membranes, leading to increased Ca(2+) transfer to mitochondria which promotes apoptosis. Required for the correct formation of the microtubule organizing center during oocyte cell division, potentially via regulation of protein abundance and localization of other microtubule organizing center components such as AURKA and TPX2. In Rattus norvegicus (Rat), this protein is Bcl-2-like protein 10.